A 277-amino-acid chain; its full sequence is Indole-3-glycerol phosphate synthase (277 aa).

Belongs to the TrpC family.

It catalyses the reaction 1-(2-carboxyphenylamino)-1-deoxy-D-ribulose 5-phosphate + H(+) = (1S,2R)-1-C-(indol-3-yl)glycerol 3-phosphate + CO2 + H2O. It participates in amino-acid biosynthesis; L-tryptophan biosynthesis; L-tryptophan from chorismate: step 4/5. The sequence is that of Indole-3-glycerol phosphate synthase (trpC) from Pseudomonas putida (Arthrobacter siderocapsulatus).